Here is a 219-residue protein sequence, read N- to C-terminus: Lipid transferase CIDEB (219 aa).

One can recognise a CIDE-N domain in the interval 34-110; sequence PQRPFRVCDH…VLQSGQSWSP (77 aa).

It belongs to the CIDE family. As to quaternary structure, interacts with DFFA. Interacts with DFFB; inhibited by DFFB. Interacts with APOB. Interacts with PREB/SEC12; facilitating loading of SCAP-SREBP into COPII vesicles. In terms of assembly, (Microbial infection) Interacts (via N-terminus) with HCV non-structural protein 5A (via N-terminus); this interaction seems to regulate the association of HCV particles with ApoE. As to expression, highly expressed in liver and small intestine and, at lower levels, in colon, kidney and spleen.

The protein localises to the lipid droplet. It localises to the endoplasmic reticulum membrane. It is found in the golgi apparatus. The protein resides in the cytoplasmic vesicle. Its subcellular location is the COPI-coated vesicle. In terms of biological role, lipid transferase specifically expressed in hepatocytes, which promotes unilocular lipid droplet formation by mediating lipid droplet fusion. Lipid droplet fusion promotes their enlargement, restricting lipolysis and favoring lipid storage. Localizes on the lipid droplet surface, at focal contact sites between lipid droplets, and mediates atypical lipid droplet fusion by promoting directional net neutral lipid transfer from the smaller to larger lipid droplets. The transfer direction may be driven by the internal pressure difference between the contacting lipid droplet pair. Promotes lipid exchange and lipid droplet fusion in both small and large lipid droplet-containing hepatocytes. In addition to its role in lipid droplet fusion, also involved in cytoplasmic vesicle biogenesis and transport. Required for very-low-density lipoprotein (VLDL) lipidation and maturation. Probably involved in the biogenesis of VLDL transport vesicles by forming a COPII vesicle coat and facilitating the formation of endoplasmic reticulum-derived large vesicles. Also involved in sterol-regulated export of the SCAP-SREBP complex, composed of SCAP, SREBF1/SREBP1 and SREBF2/SREBP2, by promoting loading of SCAP-SREBP into COPII vesicles. May also activate apoptosis. Functionally, (Microbial infection) Involved in Hepatatis C virus (HCV) assembly and required for HCV entry into hepatocytes. This Homo sapiens (Human) protein is Lipid transferase CIDEB.